Consider the following 258-residue polypeptide: uncharacterized protein (258 aa).

Helical transmembrane passes span 38-58 (VFGL…LFIA), 72-92 (ALIF…IIFI), and 111-131 (FLVI…MLWW).

It localises to the cell membrane. This is an uncharacterized protein from Mycoplasma pneumoniae (strain ATCC 29342 / M129 / Subtype 1) (Mycoplasmoides pneumoniae).